The following is a 283-amino-acid chain: S-methyl-5'-thioadenosine phosphorylase (283 aa).

Thr18 contributes to the phosphate binding site. Lys51 carries the post-translational modification N6-acetyllysine. Phosphate contacts are provided by residues 60-61 and 93-94; these read RH and TA. Met196 serves as a coordination point for substrate. Residue Thr197 participates in phosphate binding. A substrate-binding site is contributed by 220–222; that stretch reads DYD.

This sequence belongs to the PNP/MTAP phosphorylase family. MTAP subfamily. As to quaternary structure, homotrimer.

It is found in the cytoplasm. Its subcellular location is the nucleus. It carries out the reaction S-methyl-5'-thioadenosine + phosphate = 5-(methylsulfanyl)-alpha-D-ribose 1-phosphate + adenine. Its pathway is amino-acid biosynthesis; L-methionine biosynthesis via salvage pathway; S-methyl-5-thio-alpha-D-ribose 1-phosphate from S-methyl-5'-thioadenosine (phosphorylase route): step 1/1. Catalyzes the reversible phosphorylation of S-methyl-5'-thioadenosine (MTA) to adenine and 5-methylthioribose-1-phosphate. Involved in the breakdown of MTA, a major by-product of polyamine biosynthesis. Responsible for the first step in the methionine salvage pathway after MTA has been generated from S-adenosylmethionine. Has broad substrate specificity with 6-aminopurine nucleosides as preferred substrates. The protein is S-methyl-5'-thioadenosine phosphorylase of Bos taurus (Bovine).